A 590-amino-acid chain; its full sequence is O-fucosyltransferase 2 (590 aa).

Basic and acidic residues predominate over residues 1–16 (MGQERPNDEERPESRD). Residues 1 to 26 (MGQERPNDEERPESRDLGVYGCSPPH) form a disordered region. Residues 67–87 (TAIGVMAILGFFCLVNWFMLS) form a helical; Signal-anchor for type II membrane protein membrane-spanning segment. The N-linked (GlcNAc...) asparagine glycan is linked to N125. 365-367 (HLR) provides a ligand contact to substrate. N485 and N546 each carry an N-linked (GlcNAc...) asparagine glycan.

It belongs to the glycosyltransferase GT106 family.

The protein resides in the membrane. It participates in glycan metabolism. The protein is O-fucosyltransferase 2 of Arabidopsis thaliana (Mouse-ear cress).